A 216-amino-acid chain; its full sequence is Adenylate kinase (216 aa).

Residue 10-15 participates in ATP binding; it reads GAGKGT. Residues 30 to 59 form an NMP region; the sequence is STGDIFRANIKEKTPLGIEAKRYIDNGQLV. Residues Thr-31, Arg-36, 57–59, 85–88, and Gln-92 each bind AMP; these read QLV and GFPR. Positions 126–163 are LID; the sequence is GRRVCTSCGASYHIRFNPPKIEGKCDICDNELIQRKDD. Arg-127 serves as a coordination point for ATP. Zn(2+)-binding residues include Cys-130 and Cys-133. 136 to 137 is an ATP binding site; that stretch reads SY. 2 residues coordinate Zn(2+): Cys-150 and Cys-153. AMP-binding residues include Arg-160 and Arg-171. Glu-199 provides a ligand contact to ATP.

The protein belongs to the adenylate kinase family. Monomer.

The protein localises to the cytoplasm. It catalyses the reaction AMP + ATP = 2 ADP. It functions in the pathway purine metabolism; AMP biosynthesis via salvage pathway; AMP from ADP: step 1/1. In terms of biological role, catalyzes the reversible transfer of the terminal phosphate group between ATP and AMP. Plays an important role in cellular energy homeostasis and in adenine nucleotide metabolism. This Clostridium botulinum (strain 657 / Type Ba4) protein is Adenylate kinase.